The primary structure comprises 205 residues: Mitotic spindle assembly checkpoint protein MAD2A (205 aa).

A2 is subject to N-acetylalanine. Residues 14-197 (RGSAEIVAEF…TTIHKVNSMV (184 aa)) form the HORMA domain. S130, S170, S185, and S195 each carry phosphoserine. Residues 195–205 (SMVAYKTPVND) are required for assuming the closed conformation and for interaction with CDC20.

It belongs to the MAD2 family. As to quaternary structure, monomer and homodimer. Heterodimerizes with MAD2L1 in order to form a tetrameric MAD1L1-MAD2L1 core complex. In the closed and open conformation, interacts with MAD1L1. Formation of a heterotetrameric core complex containing two molecules each of MAD1L1 and of MAD2L1 promotes binding of another molecule of MAD2L1 to each MAD2L1, resulting in a heterohexamer. Interacts with MAD2L1BP. Interacts with ADAM17/TACE. Interacts with CDC20. Dimeric MAD2L1 in the closed conformation interacts with CDC20. Monomeric MAD2L1 in the open conformation does not interact with CDC20. CDC20 competes with MAD1L1 for MAD2L1 binding. In the closed conformation, interacts with BUB1B. Interacts with TTK. Interacts with TPR. Binds to UBD (via ubiquitin-like 1 domain) during mitosis. Interacts with isoform 1 and isoform 2 of NEK2. Interacts with HSF1; this interaction occurs in mitosis. In terms of processing, phosphorylated on multiple serine residues. The level of phosphorylation varies during the cell cycle and is highest during mitosis. Phosphorylation abolishes interaction with MAD1L1 and reduces interaction with CDC20. Phosphorylated by NEK2.

The protein resides in the nucleus. The protein localises to the chromosome. It is found in the centromere. It localises to the kinetochore. Its subcellular location is the cytoplasm. The protein resides in the cytoskeleton. The protein localises to the spindle pole. Component of the spindle-assembly checkpoint that prevents the onset of anaphase until all chromosomes are properly aligned at the metaphase plate. In the closed conformation (C-MAD2) forms a heterotetrameric complex with MAD1L1 at unattached kinetochores during prometaphase, and recruits an open conformation of MAD2L1 (O-MAD2) which then promotes the conversion of O-MAD2 to C-MAD2. Required for the execution of the mitotic checkpoint which monitors the process of kinetochore-spindle attachment and inhibits the activity of the anaphase promoting complex by sequestering CDC20 until all chromosomes are aligned at the metaphase plate. This is Mitotic spindle assembly checkpoint protein MAD2A (Mad2l1) from Mus musculus (Mouse).